The following is a 117-amino-acid chain: Ribosome-binding factor A (117 aa).

Belongs to the RbfA family. Monomer. Binds 30S ribosomal subunits, but not 50S ribosomal subunits or 70S ribosomes.

It localises to the cytoplasm. Its function is as follows. One of several proteins that assist in the late maturation steps of the functional core of the 30S ribosomal subunit. Associates with free 30S ribosomal subunits (but not with 30S subunits that are part of 70S ribosomes or polysomes). Required for efficient processing of 16S rRNA. May interact with the 5'-terminal helix region of 16S rRNA. The sequence is that of Ribosome-binding factor A from Leuconostoc citreum (strain KM20).